The following is a 641-amino-acid chain: Chaperone protein DnaK (641 aa).

Thr-199 carries the phosphothreonine; by autocatalysis modification. The segment at 602 to 641 (MYADQADQAQQAGGQEEGQAKSADDAVDAEFEEVKDDDKK) is disordered. Residues 604-615 (ADQADQAQQAGG) are compositionally biased toward low complexity. The span at 626–641 (DAVDAEFEEVKDDDKK) shows a compositional bias: acidic residues.

This sequence belongs to the heat shock protein 70 family.

Its function is as follows. Acts as a chaperone. The sequence is that of Chaperone protein DnaK from Marinobacter nauticus (strain ATCC 700491 / DSM 11845 / VT8) (Marinobacter aquaeolei).